The sequence spans 89 residues: LYR motif-containing protein 4 (89 aa).

The protein belongs to the complex I LYR family.

It localises to the mitochondrion. The protein localises to the nucleus. The protein operates within cofactor biosynthesis; iron-sulfur cluster biosynthesis. In terms of biological role, required for nuclear and mitochondrial iron-sulfur protein biosynthesis. This is LYR motif-containing protein 4 (lyrm4) from Xenopus laevis (African clawed frog).